The following is a 324-amino-acid chain: Serpentine receptor class gamma-10 (324 aa).

Transmembrane regions (helical) follow at residues 39 to 59, 69 to 89, 91 to 111, 128 to 146, 155 to 175, 206 to 226, 246 to 266, and 279 to 299; these read SSYL…VFHG, MLYC…VIFG, IFIY…TPSI, TFSQ…IFLM, ILKP…WKIL, LFHF…TILG, MIMA…VFFA, and IVSF…IVMS.

This sequence belongs to the nematode receptor-like protein srg family.

The protein localises to the membrane. This is Serpentine receptor class gamma-10 (srg-10) from Caenorhabditis elegans.